Consider the following 126-residue polypeptide: S-adenosylmethionine decarboxylase proenzyme (126 aa).

Residue Ser-63 is the Schiff-base intermediate with substrate; via pyruvic acid of the active site. Residue Ser-63 is modified to Pyruvic acid (Ser); by autocatalysis. His-68 functions as the Proton acceptor; for processing activity in the catalytic mechanism. Cys-83 functions as the Proton donor; for catalytic activity in the catalytic mechanism.

It belongs to the prokaryotic AdoMetDC family. Type 1 subfamily. In terms of assembly, heterotetramer of two alpha and two beta chains arranged as a dimer of alpha/beta heterodimers. It depends on pyruvate as a cofactor. Is synthesized initially as an inactive proenzyme. Formation of the active enzyme involves a self-maturation process in which the active site pyruvoyl group is generated from an internal serine residue via an autocatalytic post-translational modification. Two non-identical subunits are generated from the proenzyme in this reaction, and the pyruvate is formed at the N-terminus of the alpha chain, which is derived from the carboxyl end of the proenzyme. The post-translation cleavage follows an unusual pathway, termed non-hydrolytic serinolysis, in which the side chain hydroxyl group of the serine supplies its oxygen atom to form the C-terminus of the beta chain, while the remainder of the serine residue undergoes an oxidative deamination to produce ammonia and the pyruvoyl group blocking the N-terminus of the alpha chain.

It carries out the reaction S-adenosyl-L-methionine + H(+) = S-adenosyl 3-(methylsulfanyl)propylamine + CO2. Its pathway is amine and polyamine biosynthesis; S-adenosylmethioninamine biosynthesis; S-adenosylmethioninamine from S-adenosyl-L-methionine: step 1/1. Functionally, catalyzes the decarboxylation of S-adenosylmethionine to S-adenosylmethioninamine (dcAdoMet), the propylamine donor required for the synthesis of the polyamines spermine and spermidine from the diamine putrescine. The protein is S-adenosylmethionine decarboxylase proenzyme of Oceanobacillus iheyensis (strain DSM 14371 / CIP 107618 / JCM 11309 / KCTC 3954 / HTE831).